Here is a 98-residue protein sequence, read N- to C-terminus: MAPRKPSKKVGPQKRPSAEKRVITSKKKQLRNQSFKSRVKTTLKKFELAVQSGDVASISAGLSSVYSIADKAVKRGIFKKGKADRVKARASGRACPTA.

The segment covering methionine 1–proline 12 has biased composition (basic residues). The interval methionine 1–serine 34 is disordered.

Belongs to the bacterial ribosomal protein bS20 family.

Functionally, binds directly to 16S ribosomal RNA. This chain is Small ribosomal subunit protein bS20, found in Chlamydia muridarum (strain MoPn / Nigg).